The following is a 307-amino-acid chain: Membrane protein insertase YidC 1 (307 aa).

An N-terminal signal peptide occupies residues 1-22 (MKSKKGLTLTITLGTLALFLSG). Cys-23 carries N-palmitoyl cysteine lipidation. The S-diacylglycerol cysteine moiety is linked to residue Cys-23. A run of 5 helical transmembrane segments spans residues 59–79 (YGWA…PMMI), 136–156 (GIGC…YYAI), 177–197 (LILA…SMIG), 205–225 (TMRL…MSAP), and 226–246 (AGLG…TLII). The tract at residues 260-307 (ELKKHPIKTPTPTQPKPINATESKPSHPRPQNNAGRGRNAGKQQRHHK) is disordered.

It belongs to the OXA1/ALB3/YidC family. Type 2 subfamily.

Its subcellular location is the cell membrane. Functionally, required for the insertion and/or proper folding and/or complex formation of integral membrane proteins into the membrane. Involved in integration of membrane proteins that insert both dependently and independently of the Sec translocase complex, as well as at least some lipoproteins. This chain is Membrane protein insertase YidC 1, found in Lactiplantibacillus plantarum (strain ATCC BAA-793 / NCIMB 8826 / WCFS1) (Lactobacillus plantarum).